Reading from the N-terminus, the 149-residue chain is Arginine repressor (149 aa).

It belongs to the ArgR family.

The protein resides in the cytoplasm. It functions in the pathway amino-acid biosynthesis; L-arginine biosynthesis [regulation]. Its function is as follows. Regulates arginine biosynthesis genes. The protein is Arginine repressor of Chlorobaculum parvum (strain DSM 263 / NCIMB 8327) (Chlorobium vibrioforme subsp. thiosulfatophilum).